We begin with the raw amino-acid sequence, 547 residues long: Chaperonin GroEL (547 aa).

ATP-binding positions include 30–33, K51, 87–91, G415, and D496; these read TLGP and DGTTT. The interval 527 to 547 is disordered; that stretch reads KKDSPAMPGGGGMGGMGGMDF. A compositionally biased stretch (gly residues) spans 534 to 547; sequence PGGGGMGGMGGMDF.

It belongs to the chaperonin (HSP60) family. Forms a cylinder of 14 subunits composed of two heptameric rings stacked back-to-back. Interacts with the co-chaperonin GroES.

Its subcellular location is the cytoplasm. It carries out the reaction ATP + H2O + a folded polypeptide = ADP + phosphate + an unfolded polypeptide.. In terms of biological role, together with its co-chaperonin GroES, plays an essential role in assisting protein folding. The GroEL-GroES system forms a nano-cage that allows encapsulation of the non-native substrate proteins and provides a physical environment optimized to promote and accelerate protein folding. This Methylocella silvestris (strain DSM 15510 / CIP 108128 / LMG 27833 / NCIMB 13906 / BL2) protein is Chaperonin GroEL.